The chain runs to 99 residues: Ubiquitin-related modifier 1 homolog (99 aa).

Position 99 is a 1-thioglycine (Gly-99). Gly-99 is covalently cross-linked (Glycyl lysine isopeptide (Gly-Lys) (interchain with K-? in acceptor proteins)).

This sequence belongs to the URM1 family. Post-translationally, C-terminal thiocarboxylation occurs in 2 steps, it is first acyl-adenylated (-COAMP) via the hesA/moeB/thiF part of the MOCS3 homolog, then thiocarboxylated (-COSH) via the rhodanese domain of the MOCS3 homolog.

It is found in the cytoplasm. The protein operates within tRNA modification; 5-methoxycarbonylmethyl-2-thiouridine-tRNA biosynthesis. Functionally, acts as a sulfur carrier required for 2-thiolation of mcm(5)S(2)U at tRNA wobble positions of cytosolic tRNA(Lys), tRNA(Glu) and tRNA(Gln). Serves as sulfur donor in tRNA 2-thiolation reaction by being thiocarboxylated (-COSH) at its C-terminus by MOCS3. The sulfur is then transferred to tRNA to form 2-thiolation of mcm(5)S(2)U. Also acts as a ubiquitin-like protein (UBL) that is covalently conjugated via an isopeptide bond to lysine residues of target proteins. The thiocarboxylated form serves as substrate for conjugation and oxidative stress specifically induces the formation of UBL-protein conjugates. The sequence is that of Ubiquitin-related modifier 1 homolog from Chlamydomonas reinhardtii (Chlamydomonas smithii).